The sequence spans 99 residues: uncharacterized protein (99 aa).

A helical transmembrane segment spans residues 10–29 (ELSVHTGTVTHTIFVYVFLG).

It is found in the membrane. This is an uncharacterized protein from Schizosaccharomyces pombe (strain 972 / ATCC 24843) (Fission yeast).